The following is a 1050-amino-acid chain: DNA ligase 4 (1050 aa).

The interval 1–22 (MNTNRRSRSPDEEALEEDQHQY) is disordered. Residues Glu-329, Lys-331, Leu-332, Arg-336, Glu-398, Phe-438, Glu-498, Lys-503, Lys-520, and Lys-522 each contribute to the ATP site. The N6-AMP-lysine intermediate role is filled by Lys-331. Glu-398 contributes to the Mg(2+) binding site. Glu-498 contributes to the Mg(2+) binding site. Residues 691–702 (QEQERKKMEMEN) are compositionally biased toward basic and acidic residues. Positions 691–711 (QEQERKKMEMENRKRKPATKR) are disordered. BRCT domains lie at 742–840 (ASKR…KENK) and 936–1049 (LRSF…EYVA).

It belongs to the ATP-dependent DNA ligase family. Requires Mg(2+) as cofactor.

Its subcellular location is the nucleus. The catalysed reaction is ATP + (deoxyribonucleotide)n-3'-hydroxyl + 5'-phospho-(deoxyribonucleotide)m = (deoxyribonucleotide)n+m + AMP + diphosphate.. Its function is as follows. DNA ligase involved in DNA non-homologous end joining (NHEJ); required for double-strand break (DSB) repair. This chain is DNA ligase 4 (mus-53), found in Neurospora crassa (strain ATCC 24698 / 74-OR23-1A / CBS 708.71 / DSM 1257 / FGSC 987).